The following is a 361-amino-acid chain: UDP-3-O-acylglucosamine N-acyltransferase (361 aa).

His-258 serves as the catalytic Proton acceptor.

It belongs to the transferase hexapeptide repeat family. LpxD subfamily. In terms of assembly, homotrimer.

The catalysed reaction is a UDP-3-O-[(3R)-3-hydroxyacyl]-alpha-D-glucosamine + a (3R)-hydroxyacyl-[ACP] = a UDP-2-N,3-O-bis[(3R)-3-hydroxyacyl]-alpha-D-glucosamine + holo-[ACP] + H(+). It functions in the pathway bacterial outer membrane biogenesis; LPS lipid A biosynthesis. Catalyzes the N-acylation of UDP-3-O-acylglucosamine using 3-hydroxyacyl-ACP as the acyl donor. Is involved in the biosynthesis of lipid A, a phosphorylated glycolipid that anchors the lipopolysaccharide to the outer membrane of the cell. The polypeptide is UDP-3-O-acylglucosamine N-acyltransferase (Nitrobacter hamburgensis (strain DSM 10229 / NCIMB 13809 / X14)).